The chain runs to 352 residues: C-C chemokine receptor type 5 (352 aa).

Over 1–30 the chain is Extracellular; sequence MDYQTSTPLYDIDYGMSEPCQKLNVRQIAA. Tyr-3 is subject to Sulfotyrosine. A glycan (O-linked (GalNAc...) serine) is linked at Ser-6. Sulfotyrosine is present on residues Tyr-10 and Tyr-14. 2 disulfide bridges follow: Cys-20/Cys-269 and Cys-101/Cys-178. The helical transmembrane segment at 31-58 threads the bilayer; that stretch reads RLLPPLYSLVFIFGFVGNMLVVLILINC. At 59–68 the chain is on the cytoplasmic side; that stretch reads KKLKSMTDIY. Residues 69-89 traverse the membrane as a helical segment; it reads LLNLAISDLLFIITIPFWAHY. Topologically, residues 90–102 are extracellular; it reads AADQWVFGNTMCQ. A helical transmembrane segment spans residues 103–124; that stretch reads LFTGFYFIGYFGGIFFIILLTI. Residues 125-141 lie on the Cytoplasmic side of the membrane; sequence DRYLAIVHAVFALKART. The helical transmembrane segment at 142 to 166 threads the bilayer; it reads VTFGAATSVVTWVVAVFASLPGIIF. Residues 167-198 lie on the Extracellular side of the membrane; that stretch reads TKSQKEGSRHTCSPHFPSSQYHFWKNFQTLKI. A helical transmembrane segment spans residues 199–218; sequence VILGLVLPLLVMIVCYSGII. Topologically, residues 219–235 are cytoplasmic; that stretch reads KTLLRCRNEKKKHKAVR. The chain crosses the membrane as a helical span at residues 236–260; that stretch reads LIFVIMIVYFLFWAPYNIVLLLSTF. Topologically, residues 261-277 are extracellular; sequence QEFFGLNNCSGSNRLDQ. Residues 278 to 301 form a helical membrane-spanning segment; sequence AMQVTETLGMTHCCINPIIYAFVG. Over 302 to 352 the chain is Cytoplasmic; that stretch reads EKFRNYLLRFFRKYFASRFCKGCPVFQGEAPERVSSVYTRSTGEQEISVGL. S-palmitoyl cysteine attachment occurs at residues Cys-321 and Cys-324. Phosphoserine; by BARK1 is present on residues Ser-336, Ser-337, Ser-342, and Ser-349.

It belongs to the G-protein coupled receptor 1 family. In terms of assembly, interacts with PRAF2. Efficient ligand binding to CCL3/MIP-1alpha and CCL4/MIP-1beta requires sulfation, O-glycosylation and sialic acid modifications. Glycosylation on Ser-6 is required for efficient binding of CCL4. Interacts with GRK2. Interacts with ARRB1 and ARRB2. Interacts with CNIH4. Interacts with S100A4; this interaction stimulates T-lymphocyte chemotaxis. Sulfated on at least 2 of the N-terminal tyrosines. Sulfation is required for efficient binding of the chemokines, CCL3 and CCL4. In terms of processing, O-glycosylated, but not N-glycosylated. Ser-6 appears to be the major site. Also sialylated glycans present which contribute to chemokine binding. Ser-17 may also be glycosylated and, if so, with small moieties such as a T-antigen. Post-translationally, palmitoylation in the C-terminal is important for cell surface expression. Phosphorylation on serine residues in the C-terminal is stimulated by binding CC chemokines especially by APO-RANTES.

It is found in the cell membrane. In terms of biological role, receptor for a number of inflammatory CC-chemokines including CCL3/MIP-1-alpha, CCL4/MIP-1-beta and RANTES and subsequently transduces a signal by increasing the intracellular calcium ion level. May play a role in the control of granulocytic lineage proliferation or differentiation. Participates in T-lymphocyte migration to the infection site by acting as a chemotactic receptor. The sequence is that of C-C chemokine receptor type 5 (CCR5) from Bos taurus (Bovine).